A 375-amino-acid chain; its full sequence is Adiponectin receptor protein 1 (375 aa).

The interval 1–60 (MSSHKGSAGAQGNGAPSGNREADTVELAELGPLLEEKGKRAASSPAKAEEDQACPVPQEE) is disordered. The Cytoplasmic portion of the chain corresponds to 1 to 136 (MSSHKGSAGA…SIFRIHTETG (136 aa)). Residues 137–157 (NIWTHLLGFVLFLFLGILTML) form a helical membrane-spanning segment. The Extracellular segment spans residues 158-170 (RPNMYFMAPLQEK). Residues 171–191 (VVFGMFFLGAVLCLSFSWLFH) form a helical membrane-spanning segment. A Zn(2+)-binding site is contributed by His-191. The Cytoplasmic portion of the chain corresponds to 192 to 203 (TVYCHSEKVSRT). The helical transmembrane segment at 204-224 (FSKLDYSGIALLIMGSFVPWL) threads the bilayer. Over 225-234 (YYSFYCSPQP) the chain is Extracellular. Residues 235 to 255 (RLIYLSIVCVLGISAIIVAQW) traverse the membrane as a helical segment. At 256 to 264 (DRFATPKHR) the chain is on the cytoplasmic side. The helical transmembrane segment at 265–285 (QTRAGVFLGLGLSGVVPTMHF) threads the bilayer. Residues 286–298 (TIAEGFVKATTVG) are Extracellular-facing. A helical transmembrane segment spans residues 299–319 (QMGWFFLMAVMYITGAGLYAA). Residues 320–337 (RIPERFFPGKFDIWFQSH) are Cytoplasmic-facing. The Zn(2+) site is built by His-337 and His-341. A helical transmembrane segment spans residues 338–358 (QIFHVLVVAAAFVHFYGVSNL). The Extracellular segment spans residues 359–375 (QEFRYGLEGGCTDDSLL).

The protein belongs to the ADIPOR family. May form homooligomers and heterooligomers with ADIPOR2. Interacts with APPL2 (via BAR domain); hinders the accessibility of APPL1 to ADIPOR1; negatively regulates adiponectin signaling; ADIPOQ dissociates this interaction and facilitates the recruitment of APPL1 to ADIPOR1. Interacts with APPL1; ADIPOQ enhances this interaction; inhibites adiponectin-stimulated binding of APPL2 to ADIPOR1. In terms of tissue distribution, detected in brain and quadriceps muscle (at protein level). Widely expressed. Expressed in heart, kidney, liver, lung, skeletal muscle, white adipose tissue, brown adipose tissue, aorta and spleen. Weakly expressed in brain and testis.

It is found in the cell membrane. Receptor for ADIPOQ, an essential hormone secreted by adipocytes that regulates glucose and lipid metabolism. Required for normal glucose and fat homeostasis and for maintaining a normal body weight. ADIPOQ-binding activates a signaling cascade that leads to increased AMPK activity, and ultimately to increased fatty acid oxidation, increased glucose uptake and decreased gluconeogenesis. Has high affinity for globular adiponectin and low affinity for full-length adiponectin. This is Adiponectin receptor protein 1 from Mus musculus (Mouse).